A 171-amino-acid polypeptide reads, in one-letter code: Ribosome maturation factor RimP (171 aa).

The protein belongs to the RimP family.

The protein localises to the cytoplasm. Its function is as follows. Required for maturation of 30S ribosomal subunits. The sequence is that of Ribosome maturation factor RimP from Anaeromyxobacter sp. (strain K).